The following is a 112-amino-acid chain: UPF0251 protein MA_4245 (112 aa).

The protein belongs to the UPF0251 family.

The polypeptide is UPF0251 protein MA_4245 (Methanosarcina acetivorans (strain ATCC 35395 / DSM 2834 / JCM 12185 / C2A)).